A 271-amino-acid polypeptide reads, in one-letter code: Dermonecrotic toxin SpeSicTox-betaIF1 (271 aa).

His3 is an active-site residue. Residues Glu23 and Asp25 each coordinate Mg(2+). His39 functions as the Nucleophile in the catalytic mechanism. Cystine bridges form between Cys43/Cys49 and Cys45/Cys188. Asp83 serves as a coordination point for Mg(2+).

The protein belongs to the arthropod phospholipase D family. Class II subfamily. The cofactor is Mg(2+). In terms of tissue distribution, expressed by the venom gland.

The protein resides in the secreted. It catalyses the reaction an N-(acyl)-sphingosylphosphocholine = an N-(acyl)-sphingosyl-1,3-cyclic phosphate + choline. The enzyme catalyses an N-(acyl)-sphingosylphosphoethanolamine = an N-(acyl)-sphingosyl-1,3-cyclic phosphate + ethanolamine. It carries out the reaction a 1-acyl-sn-glycero-3-phosphocholine = a 1-acyl-sn-glycero-2,3-cyclic phosphate + choline. The catalysed reaction is a 1-acyl-sn-glycero-3-phosphoethanolamine = a 1-acyl-sn-glycero-2,3-cyclic phosphate + ethanolamine. Functionally, dermonecrotic toxins cleave the phosphodiester linkage between the phosphate and headgroup of certain phospholipids (sphingolipid and lysolipid substrates), forming an alcohol (often choline) and a cyclic phosphate. This toxin acts on sphingomyelin (SM). It may also act on ceramide phosphoethanolamine (CPE), lysophosphatidylcholine (LPC) and lysophosphatidylethanolamine (LPE), but not on lysophosphatidylserine (LPS), and lysophosphatidylglycerol (LPG). It acts by transphosphatidylation, releasing exclusively cyclic phosphate products as second products. Induces dermonecrosis, hemolysis, increased vascular permeability, edema, inflammatory response, and platelet aggregation. The protein is Dermonecrotic toxin SpeSicTox-betaIF1 of Sicarius peruensis (Six-eyed sand spider).